The primary structure comprises 161 residues: Cyclic pyranopterin monophosphate synthase (161 aa).

Substrate-binding positions include 75-77 and 115-116; these read MCH and ME. Residue D130 is part of the active site.

Belongs to the MoaC family. As to quaternary structure, homohexamer; trimer of dimers.

The enzyme catalyses (8S)-3',8-cyclo-7,8-dihydroguanosine 5'-triphosphate = cyclic pyranopterin phosphate + diphosphate. Its pathway is cofactor biosynthesis; molybdopterin biosynthesis. Functionally, catalyzes the conversion of (8S)-3',8-cyclo-7,8-dihydroguanosine 5'-triphosphate to cyclic pyranopterin monophosphate (cPMP). The chain is Cyclic pyranopterin monophosphate synthase from Bacillus cereus (strain G9842).